Reading from the N-terminus, the 132-residue chain is Small ribosomal subunit protein uS8 (132 aa).

It belongs to the universal ribosomal protein uS8 family. In terms of assembly, part of the 30S ribosomal subunit. Contacts proteins S5 and S12.

In terms of biological role, one of the primary rRNA binding proteins, it binds directly to 16S rRNA central domain where it helps coordinate assembly of the platform of the 30S subunit. In Mycobacterium avium (strain 104), this protein is Small ribosomal subunit protein uS8.